The following is a 290-amino-acid chain: Ribosomal protein L11 methyltransferase (290 aa).

Residues Thr135, Gly158, Asp180, and Asn227 each coordinate S-adenosyl-L-methionine.

The protein belongs to the methyltransferase superfamily. PrmA family.

It is found in the cytoplasm. It catalyses the reaction L-lysyl-[protein] + 3 S-adenosyl-L-methionine = N(6),N(6),N(6)-trimethyl-L-lysyl-[protein] + 3 S-adenosyl-L-homocysteine + 3 H(+). In terms of biological role, methylates ribosomal protein L11. This chain is Ribosomal protein L11 methyltransferase, found in Chelativorans sp. (strain BNC1).